Consider the following 205-residue polypeptide: MLMKSRVNLLFKGPFFFRERCFQTLLNPVIAIRQLSHGSLRNSRSCRIDAKSNTLTKEIFPKINNEFKIKNRFYSSKLANDQFTLQEQCDEKGIPFILYVKDSAKKQLEKIAERKPEENSVLRVTVDGGGCHGYQVSFRMDNKIGNADTVFVRGKARVVADNISLPLISGSEIEYTNELIGSSFQLLNNPRAKTSCGCNVSFDVE.

The Fe cation site is built by Cys131, Cys196, and Cys198.

This sequence belongs to the HesB/IscA family.

Its subcellular location is the mitochondrion matrix. In terms of biological role, involved in the assembly of mitochondrial and cytoplasmic iron-sulfur proteins. Probably involved in the binding of an intermediate of Fe/S cluster assembly. The sequence is that of Iron-sulfur assembly protein 2 (isa2) from Schizosaccharomyces pombe (strain 972 / ATCC 24843) (Fission yeast).